The primary structure comprises 466 residues: Fez family zinc finger protein 1 (466 aa).

The Engrailed homology 1 repressor motif lies at 34-49 (PLAFSIERIMSRTPEP). 6 consecutive C2H2-type zinc fingers follow at residues 261–283 (FTCEVCGKVFNAHYNLTRHMPVH), 289–311 (FVCKICGKGFRQASTLCRHKIIH), 317–339 (HKCNQCGKAFNRSSTLNTHTRIH), 345–367 (FVCEFCGKGFHQKGNYKNHKLTH), 373–395 (FKCNICNKAFHQIYNLTFHMHTH), and 401–424 (FTCPTCGKGFCRNFDLKKHVRKLH). The tract at residues 446 to 466 (LPNREQSHTIIQSPQLQKSVY) is disordered. Polar residues predominate over residues 453-466 (HTIIQSPQLQKSVY).

Belongs to the krueppel C2H2-type zinc-finger protein family.

It is found in the nucleus. Transcription repressor. Involved in the development of the forebrain region. The protein is Fez family zinc finger protein 1 (fezf1) of Xenopus laevis (African clawed frog).